Consider the following 202-residue polypeptide: Translation initiation factor IF-3 (202 aa).

Belongs to the IF-3 family. Monomer.

It localises to the cytoplasm. Its function is as follows. IF-3 binds to the 30S ribosomal subunit and shifts the equilibrium between 70S ribosomes and their 50S and 30S subunits in favor of the free subunits, thus enhancing the availability of 30S subunits on which protein synthesis initiation begins. In Prochlorococcus marinus (strain MIT 9211), this protein is Translation initiation factor IF-3.